The sequence spans 557 residues: MFCFQCEQTMRSETGAAGCGGPKGVCGKDEATADLQDVLIHQLKGIGQYVTRLQALGRRDAEADSFILYALFTTLTNVNFNRARFVEMIATAARLRDRLRDAYAEAASEAGQTPEALGGAAAFIPADSLVGLLAQANVASVRAGAEAVGEDVIGMRALLLYGLKGVAAYAHHAEVLGETREAIADGVARVLDLLAGDPVDLELMLEEALALGRVNFTVMEALDAANTGTYGAPTPTPVRITPVEGKAILVSGHDLRDLHAILEATKDTGINVYTHGEMLPAHGYPKLHAYSHLAGNYGTAWQNQQTEFAAFPGPIVMTSNCLIEPQPLYRNRIFTAGPVGWPGLRHIADGDFSPVVQAAKALPGFTRTEPERTVTTGFGREAVLGAAEQVIGAVKAGAIRHFFLIGGCDGAAPGRNYYTEFAEQAPDDTVVLTLGCGKYRFNTHEFGTIGGLPRMLDIGQCNDAYSALVIAQALAGAFECGVNDLPLSLVVSWFEQKAAAVFLTLLALGVRNVRLGPTLPGFLTPALLDILVNRFGVRPITSAEADIADALAPKAAA.

The [4Fe-4S] cluster site is built by Cys-3, Cys-6, Cys-19, and Cys-26. The hybrid [4Fe-2O-2S] cluster site is built by His-253, Glu-277, Cys-321, Cys-408, Cys-436, Cys-461, Glu-495, and Lys-497. Residue Cys-408 is modified to Cysteine persulfide.

The protein belongs to the HCP family. Requires [4Fe-4S] cluster as cofactor. Hybrid [4Fe-2O-2S] cluster serves as cofactor.

The protein resides in the cytoplasm. The catalysed reaction is A + NH4(+) + H2O = hydroxylamine + AH2 + H(+). Functionally, catalyzes the reduction of hydroxylamine to form NH(3) and H(2)O. This Acidiphilium cryptum (strain JF-5) protein is Hydroxylamine reductase.